Consider the following 244-residue polypeptide: tRNA pseudouridine synthase A (244 aa).

Asp52 functions as the Nucleophile in the catalytic mechanism. Position 111 (Tyr111) interacts with substrate.

The protein belongs to the tRNA pseudouridine synthase TruA family. In terms of assembly, homodimer.

It catalyses the reaction uridine(38/39/40) in tRNA = pseudouridine(38/39/40) in tRNA. Formation of pseudouridine at positions 38, 39 and 40 in the anticodon stem and loop of transfer RNAs. The sequence is that of tRNA pseudouridine synthase A from Thermosipho africanus (strain TCF52B).